We begin with the raw amino-acid sequence, 523 residues long: 2-isopropylmalate synthase (523 aa).

Residues 5 to 267 (VIIFDTTLRD…ETGINAKEIH (263 aa)) form the Pyruvate carboxyltransferase domain. Residues Asp14, His202, His204, and Asn238 each coordinate Mn(2+). Positions 392 to 523 (KLAQLVVHSD…QKDRSELGGV (132 aa)) are regulatory domain.

Belongs to the alpha-IPM synthase/homocitrate synthase family. LeuA type 1 subfamily. As to quaternary structure, homodimer. The cofactor is Mn(2+).

The protein localises to the cytoplasm. The enzyme catalyses 3-methyl-2-oxobutanoate + acetyl-CoA + H2O = (2S)-2-isopropylmalate + CoA + H(+). It participates in amino-acid biosynthesis; L-leucine biosynthesis; L-leucine from 3-methyl-2-oxobutanoate: step 1/4. In terms of biological role, catalyzes the condensation of the acetyl group of acetyl-CoA with 3-methyl-2-oxobutanoate (2-ketoisovalerate) to form 3-carboxy-3-hydroxy-4-methylpentanoate (2-isopropylmalate). The protein is 2-isopropylmalate synthase of Shewanella sediminis (strain HAW-EB3).